Reading from the N-terminus, the 296-residue chain is Galectin-3 (296 aa).

A compositionally biased stretch (polar residues) spans 1–11 (MADSFSLNDAL). Positions 1-150 (MADSFSLNDA…PSAPGAYPAA (150 aa)) are disordered. At Ala-2 the chain carries N-acetylalanine. Phosphoserine; by CK1 is present on residues Ser-6 and Ser-12. Composition is skewed to low complexity over residues 12-31 (SGSG…NQPA) and 38-47 (GASYPGAYPG). Tandem repeats lie at residues 36–44 (YPGASYPGA), 45–53 (YPGQAPPGG), 54–62 (YPGQAPPGG), 63–71 (YPGQAPPGG), 72–80 (YPGQAPPGG), 81–89 (YPGQAPPGG), 90–98 (YPGQAPPGG), and 99–107 (YPGQAPPGT). Residues 36-143 (YPGASYPGAY…AYPPPGQPSA (108 aa)) are 12 X 9 AA tandem repeats of Y-P-G-X(3)-P-G-[GAT]. Positions 48–120 (QAPPGGYPGQ…PTAPAYPGPT (73 aa)) are enriched in pro residues. The 9; approximate repeat unit spans residues 108–115 (YPGPTAPA). Repeat 10 spans residues 116 to 124 (YPGPTAPGT). Residues 121–133 (APGTQPGQPSGPG) are compositionally biased toward low complexity. The stretch at 125–134 (QPGQPSGPGA) is one 11; approximate repeat. Residues 135–143 (YPPPGQPSA) form a 12; approximate repeat. The region spanning 164 to 294 (YDLPLPGGVK…DIDLTSASYA (131 aa)) is the Galectin domain. 227 to 233 (WGKEERQ) is a binding site for a beta-D-galactoside. Residues 272-287 (KNLPEISKLGISGDID) carry the Nuclear export signal motif.

As to quaternary structure, probably forms homo- or heterodimers. Interacts with DMBT1. Interacts with CD6 and ALCAM. Forms a complex with the ITGA3, ITGB1 and CSPG4. Interacts with LGALS3BP, LYPD3, ZFTRAF1 and UACA. Interacts with TRIM16; this interaction mediates autophagy of damage endomembranes. Interacts with cargo receptor TMED10; the interaction mediates the translocation from the cytoplasm into the ERGIC (endoplasmic reticulum-Golgi intermediate compartment) and thereby secretion. Interacts with and inhibits by binding NCR3/NKp30. Post-translationally, the degree of phosphorylation is higher in the cytoplasmic form than in the nuclear form. In protein isolated from a canine kidney cell line, 90% of the phosphate was on Ser-6 and 10% was on Ser-12.

The protein localises to the cytoplasm. It is found in the nucleus. Its subcellular location is the secreted. Galactose-specific lectin which binds IgE. May mediate with the alpha-3, beta-1 integrin the stimulation by CSPG4 of endothelial cells migration. Together with DMBT1, required for terminal differentiation of columnar epithelial cells during early embryogenesis. In the nucleus: acts as a pre-mRNA splicing factor. Involved in acute inflammatory responses including neutrophil activation and adhesion, chemoattraction of monocytes macrophages, opsonization of apoptotic neutrophils, and activation of mast cells. Together with TRIM16, coordinates the recognition of membrane damage with mobilization of the core autophagy regulators ATG16L1 and BECN1 in response to damaged endomembranes. When secreted, interacts with NK cell-activating receptor NCR3/NKp30 acting as an inhibitory ligand which antagonizes NK cell attack. The chain is Galectin-3 (LGALS3) from Canis lupus familiaris (Dog).